A 60-amino-acid chain; its full sequence is Large ribosomal subunit protein uL30 (60 aa).

It belongs to the universal ribosomal protein uL30 family. As to quaternary structure, part of the 50S ribosomal subunit.

The protein is Large ribosomal subunit protein uL30 of Streptomyces griseus subsp. griseus (strain JCM 4626 / CBS 651.72 / NBRC 13350 / KCC S-0626 / ISP 5235).